A 517-amino-acid polypeptide reads, in one-letter code: Fatty acyl-CoA reductase wat (517 aa).

2 helical membrane passes run Ile378–Ile398 and Val492–Leu512.

It belongs to the fatty acyl-CoA reductase family.

It is found in the apical cell membrane. It catalyses the reaction a long-chain fatty acyl-CoA + 2 NADPH + 2 H(+) = a long-chain primary fatty alcohol + 2 NADP(+) + CoA. In terms of biological role, catalyzes the reduction of saturated fatty acyl-CoA to fatty alcohols. The preferred substrates are C24:0 and C26:0. Necessary for the final stages of tracheal maturation, to facilitate the transition from water-filled to gas-filled tubes. May help to maintain the integrity of the outer hydrophobic envelope of the trachea. The chain is Fatty acyl-CoA reductase wat from Drosophila melanogaster (Fruit fly).